The sequence spans 219 residues: MHCKIAIDGPAGSGKTTVAKLIAQKLGIDYLDTGAMYRIVGLYLHSIGVEPKSTSIKDILEKVNIEYIGKDYYLNGKKVGDEIRTPEAGMFASQYAANPEVREFLTKIQKQICSNRSIVAEGRDIGTVVMPDATVKIFLVASPEVRARRRYEELKSKNMEVSYEELLRQIEERDKNDSNRDVAPLVKAPDAIEIDTSNLSIEEVVEKILDIVKERCRIK.

Residue 9–17 coordinates ATP; the sequence is GPAGSGKTT.

This sequence belongs to the cytidylate kinase family. Type 1 subfamily.

It is found in the cytoplasm. It catalyses the reaction CMP + ATP = CDP + ADP. The catalysed reaction is dCMP + ATP = dCDP + ADP. This is Cytidylate kinase from Fervidobacterium nodosum (strain ATCC 35602 / DSM 5306 / Rt17-B1).